We begin with the raw amino-acid sequence, 161 residues long: Putative pre-16S rRNA nuclease (161 aa).

Residues 141-161 (AAGSPPGALVPRNRVDPDRHA) are disordered.

It belongs to the YqgF nuclease family.

The protein resides in the cytoplasm. In terms of biological role, could be a nuclease involved in processing of the 5'-end of pre-16S rRNA. In Clavibacter michiganensis subsp. michiganensis (strain NCPPB 382), this protein is Putative pre-16S rRNA nuclease.